Reading from the N-terminus, the 765-residue chain is uncharacterized protein (765 aa).

This is an uncharacterized protein from Methanocaldococcus jannaschii (strain ATCC 43067 / DSM 2661 / JAL-1 / JCM 10045 / NBRC 100440) (Methanococcus jannaschii).